We begin with the raw amino-acid sequence, 406 residues long: uncharacterized protein (406 aa).

The protein to S.pombe SpAC12C2.04.

Its subcellular location is the cytoplasm. It is found in the nucleus. This is an uncharacterized protein from Schizosaccharomyces pombe (strain 972 / ATCC 24843) (Fission yeast).